The chain runs to 242 residues: Uridylate kinase (242 aa).

Position 12–15 (12–15 (KLSG)) interacts with ATP. The interval 20-25 (GDEGFG) is involved in allosteric activation by GTP. Glycine 54 contributes to the UMP binding site. Residues glycine 55 and arginine 59 each contribute to the ATP site. UMP is bound by residues aspartate 74 and 135 to 142 (TGSPFFTT). ATP-binding residues include threonine 162, tyrosine 168, and aspartate 171.

Belongs to the UMP kinase family. In terms of assembly, homohexamer.

The protein resides in the cytoplasm. It catalyses the reaction UMP + ATP = UDP + ADP. It functions in the pathway pyrimidine metabolism; CTP biosynthesis via de novo pathway; UDP from UMP (UMPK route): step 1/1. Its activity is regulated as follows. Allosterically activated by GTP. Inhibited by UTP. Functionally, catalyzes the reversible phosphorylation of UMP to UDP. The polypeptide is Uridylate kinase (Pasteurella multocida (strain Pm70)).